We begin with the raw amino-acid sequence, 238 residues long: ATP-dependent dethiobiotin synthetase BioD (238 aa).

Residue 12-17 participates in ATP binding; it reads EVGKTV. Threonine 16 is a Mg(2+) binding site. Lysine 37 is an active-site residue. Threonine 41 contacts substrate. ATP contacts are provided by residues aspartate 50, 109–112, 170–171, and 200–202; these read EGAG, GS, and PAG. The Mg(2+) site is built by aspartate 50 and glutamate 109.

It belongs to the dethiobiotin synthetase family. As to quaternary structure, homodimer. Mg(2+) is required as a cofactor.

It is found in the cytoplasm. The catalysed reaction is (7R,8S)-7,8-diammoniononanoate + CO2 + ATP = (4R,5S)-dethiobiotin + ADP + phosphate + 3 H(+). It functions in the pathway cofactor biosynthesis; biotin biosynthesis; biotin from 7,8-diaminononanoate: step 1/2. Catalyzes a mechanistically unusual reaction, the ATP-dependent insertion of CO2 between the N7 and N8 nitrogen atoms of 7,8-diaminopelargonic acid (DAPA, also called 7,8-diammoniononanoate) to form a ureido ring. In Streptomyces coelicolor (strain ATCC BAA-471 / A3(2) / M145), this protein is ATP-dependent dethiobiotin synthetase BioD.